The following is a 454-amino-acid chain: Phosphoglucosamine mutase (454 aa).

S101 (phosphoserine intermediate) is an active-site residue. Residues S101, D243, D245, and D247 each contribute to the Mg(2+) site. S101 bears the Phosphoserine mark.

This sequence belongs to the phosphohexose mutase family. Requires Mg(2+) as cofactor. Post-translationally, activated by phosphorylation.

It catalyses the reaction alpha-D-glucosamine 1-phosphate = D-glucosamine 6-phosphate. In terms of biological role, catalyzes the conversion of glucosamine-6-phosphate to glucosamine-1-phosphate. The protein is Phosphoglucosamine mutase of Geobacter sp. (strain M21).